The chain runs to 414 residues: MNVNDFEIMAPVGSYESLMAAIKAGADSVYFGIEGLNMRARSANNFTTEDLYKIAEICRDKGVKSYLTVNTVIYDEDIALMRSVIDAAQKAQISAIIASDVAAMMYANEIGVEVHLSTQLNISNAEALRFYSRFADVVVLARELNMDQVRTIHETIVRDNICGPKGHPVRIEMFAHGALCMAVSGKCYLSLHEHNSSANRGACAQICRRGYTVKDKDSGLELDIENQYIMSPKDLKTIHFINKMMDAGVRVFKIEGRARGPEYVYTVCRCYKEAIEAYCNGTYDEEAIGRWDEQLATVFNRGFWDGYYLGQRLGEWTHRYGSGATRQKIYVGKGIKYFSRLGVAEFEIESGELHIGDEIVITGPTTGVIIQKVEEIRYELQTVEKATKGQRISIPVKEKVRPSDKLYRFDKREE.

Belongs to the peptidase U32 family. Homodimer. Requires a metal cation as cofactor.

Functionally, has collagenase activity. Hydrolyzes type I collagen. May play a role in virulence. This Porphyromonas gingivalis (strain ATCC BAA-308 / W83) protein is Collagenase (prtC).